The chain runs to 349 residues: tRNA pseudouridine synthase D (349 aa).

Phe-27 is a substrate binding site. The Nucleophile role is filled by Asp-80. Asn-129 is a binding site for substrate. The region spanning 155 to 303 (GVPNYFGAQR…VEAARRAMLL (149 aa)) is the TRUD domain. Phe-329 is a substrate binding site.

The protein belongs to the pseudouridine synthase TruD family.

It carries out the reaction uridine(13) in tRNA = pseudouridine(13) in tRNA. Functionally, responsible for synthesis of pseudouridine from uracil-13 in transfer RNAs. This is tRNA pseudouridine synthase D from Escherichia coli O17:K52:H18 (strain UMN026 / ExPEC).